The following is a 480-amino-acid chain: Glutamate--tRNA ligase (480 aa).

A 'HIGH' region motif is present at residues 21 to 31; that stretch reads PSPTGYLHVGG. Zn(2+)-binding residues include cysteine 110, cysteine 112, cysteine 137, and histidine 139. The short motif at 248–252 is the 'KMSKS' region element; sequence KLSKR. An ATP-binding site is contributed by lysine 251.

This sequence belongs to the class-I aminoacyl-tRNA synthetase family. Glutamate--tRNA ligase type 1 subfamily. In terms of assembly, monomer. Zn(2+) serves as cofactor.

Its subcellular location is the cytoplasm. The catalysed reaction is tRNA(Glu) + L-glutamate + ATP = L-glutamyl-tRNA(Glu) + AMP + diphosphate. In terms of biological role, catalyzes the attachment of glutamate to tRNA(Glu) in a two-step reaction: glutamate is first activated by ATP to form Glu-AMP and then transferred to the acceptor end of tRNA(Glu). This chain is Glutamate--tRNA ligase, found in Haemophilus influenzae (strain 86-028NP).